The primary structure comprises 347 residues: Leukocyte cell-derived chemotaxin 1 (347 aa).

The interval 1–29 (MAEGSEKVPIARAGPEDVEQGLPPAYTAA) is disordered. Residues 45–65 (VLIAGALLLLAGAIGAFYFWK) form a helical membrane-spanning segment. Residues 103-200 (GSGSEEAVEV…LCGDLPIFWL (98 aa)) form the BRICHOS domain. Cysteine 130 and cysteine 192 are joined by a disulfide. The interval 208 to 281 (KQRERREMKR…DNPYNQLEGE (74 aa)) is disordered. Residues 210-213 (RERR) constitute a propeptide that is removed on maturation. The segment covering 240–276 (TRSTPTQLTQDLGPQSNETRPMQQESDQTLNPDNPYN) has biased composition (polar residues). Asparagine 256 is a glycosylation site (N-linked (GlcNAc...) asparagine). Disulfide bonds link cysteine 295-cysteine 299, cysteine 296-cysteine 336, cysteine 306-cysteine 330, and cysteine 310-cysteine 326.

This sequence belongs to the chondromodulin-1 family. Post-translationally, after cleavage, the post-translationally modified ChM-I is secreted as a glycoprotein. In terms of tissue distribution, expressed in the cartilage and in fetal precartilaginous tissues as well as in heart and eye.

It localises to the secreted. Its subcellular location is the extracellular space. The protein resides in the extracellular matrix. The protein localises to the endomembrane system. Functionally, bifunctional growth regulator. May contribute to the rapid growth of cartilage and vascular invasion prior to the replacement of cartilage by bone during endochondral bone development. Plays a role as antiangiogenic factor in cardiac valves to suppress neovascularization. The polypeptide is Leukocyte cell-derived chemotaxin 1 (Gallus gallus (Chicken)).